The chain runs to 301 residues: MANITMKELLEAGVHFGHQTKRWNPKMKEYIFGERNGIYIIDLQKTLKMFKEASKFVSDVAAEGKLVLFVGTKRQAQDAIAEEAKRCGMFYINQRWLGGLLTNWVTVQKSVKRLKELDEMATDGRYELLPKKEVIKLERERKHLQANLAGIKNLNRLPDCLFVIDSNKEQIAVKEARKLGIPVVAVVDTNCDPSEVDYVIPGNDDALRAIRLFASKIADSVAEGSQLADKSMIESTNVSNAAEVIPQSYIGDDEEHGLAQPTEEAAPVEEEINMEEVLGKGVRKQPVSENENVEAAAAEQK.

Positions 282–301 are disordered; that stretch reads VRKQPVSENENVEAAAAEQK. Positions 289-301 are enriched in low complexity; the sequence is ENENVEAAAAEQK.

It belongs to the universal ribosomal protein uS2 family.

The sequence is that of Small ribosomal subunit protein uS2 from Koribacter versatilis (strain Ellin345).